Reading from the N-terminus, the 417-residue chain is Gamma-glutamyl phosphate reductase (417 aa).

Belongs to the gamma-glutamyl phosphate reductase family.

Its subcellular location is the cytoplasm. The enzyme catalyses L-glutamate 5-semialdehyde + phosphate + NADP(+) = L-glutamyl 5-phosphate + NADPH + H(+). It participates in amino-acid biosynthesis; L-proline biosynthesis; L-glutamate 5-semialdehyde from L-glutamate: step 2/2. Catalyzes the NADPH-dependent reduction of L-glutamate 5-phosphate into L-glutamate 5-semialdehyde and phosphate. The product spontaneously undergoes cyclization to form 1-pyrroline-5-carboxylate. The sequence is that of Gamma-glutamyl phosphate reductase from Escherichia coli O6:K15:H31 (strain 536 / UPEC).